A 45-amino-acid chain; its full sequence is Photosystem II reaction center protein K (45 aa).

Residues 1-8 (MDFALLLA) constitute a propeptide that is removed on maturation. A helical transmembrane segment spans residues 24-44 (LPLIPLFFLLLAFVWQAAVGF).

The protein belongs to the PsbK family. As to quaternary structure, PSII is composed of 1 copy each of membrane proteins PsbA, PsbB, PsbC, PsbD, PsbE, PsbF, PsbH, PsbI, PsbJ, PsbK, PsbL, PsbM, PsbT, PsbX, PsbY, PsbZ, Psb30/Ycf12, peripheral proteins PsbO, CyanoQ (PsbQ), PsbU, PsbV and a large number of cofactors. It forms dimeric complexes.

The protein localises to the cellular thylakoid membrane. Its function is as follows. One of the components of the core complex of photosystem II (PSII). PSII is a light-driven water:plastoquinone oxidoreductase that uses light energy to abstract electrons from H(2)O, generating O(2) and a proton gradient subsequently used for ATP formation. It consists of a core antenna complex that captures photons, and an electron transfer chain that converts photonic excitation into a charge separation. This is Photosystem II reaction center protein K from Gloeothece citriformis (strain PCC 7424) (Cyanothece sp. (strain PCC 7424)).